A 30-amino-acid polypeptide reads, in one-letter code: Photosystem I reaction center subunit XII (30 aa).

Residues 5 to 25 (SQIFFALCIALTAAVLAIGLG) form a helical membrane-spanning segment.

It belongs to the PsaM family.

The protein localises to the plastid. The protein resides in the chloroplast thylakoid membrane. The chain is Photosystem I reaction center subunit XII from Emiliania huxleyi (Coccolithophore).